The primary structure comprises 449 residues: MLNYTGLENKNVLVVGLAKSGYEAAKLLSKLGANVTVNDGKDLSQDAHAKDLESMGISVVSGSHPLTLLDNNPIIVKNPGIPYTVSIIDEAVKRGLKILTEVELSYLISEAPIIAVTGTNGKTTVTSLIGDMFKKSRLTGRLSGNIGYVASKVAQEVKPTDYLVTELSSFQLLGIEKYKPHIAIITNIYSAHLDYHENLENYQNAKKQIYKNQTEEDYLICNYHQRQVIESEELKAKTLYFSTQQEVDGIYIKDGFIIYKGVRIINTEDLVLPGEHNLENILAAVLACILAGVPIKAIIDSLTTFSGIEHRLQYVGTNRTNKYYNDSKATNTLATQFALNSFNQPIIWLCGGLDRGNEFDELIPYMENVRAMVVFGQTKAKFAKLGNSQGKSVIEANNVEDAVDKVQDIIEPNDVVLLSPACASWDQYSTFEERGEKFIERFRAHLPSY.

Residue 118–124 coordinates ATP; the sequence is GTNGKTT.

Belongs to the MurCDEF family.

Its subcellular location is the cytoplasm. It catalyses the reaction UDP-N-acetyl-alpha-D-muramoyl-L-alanine + D-glutamate + ATP = UDP-N-acetyl-alpha-D-muramoyl-L-alanyl-D-glutamate + ADP + phosphate + H(+). Its pathway is cell wall biogenesis; peptidoglycan biosynthesis. In terms of biological role, cell wall formation. Catalyzes the addition of glutamate to the nucleotide precursor UDP-N-acetylmuramoyl-L-alanine (UMA). In Staphylococcus aureus (strain MSSA476), this protein is UDP-N-acetylmuramoylalanine--D-glutamate ligase.